Here is a 718-residue protein sequence, read N- to C-terminus: MRAVLETADIAIVALYFILVMCIGFFAMWKSNRSTVSGYFLAGRSMTWVAIGASLFVSNIGSEHFIGLAGSGAASGFAVGAWEFNALLLLQLLGWVFIPIYIRSGVYTMPEYLSKRFGGHRIQVYFAALSLILYIFTKLSVDLYSGALFIQESLGWNLYVSVILLIGMTALLTVTGGLVAVIYTDTLQALLMIVGALTLMIISMMEIGGFEEVKRRYMLASPNVTSILLTYNLSNTNSCNVHPKKDALKMLRNPTDEDVPWPGFVLGQTPASVWYWCADQVIVQRVLAAKNIAHAKGSTLMAGFLKLLPMFIIVVPGMISRILFADDIACINPEHCMQVCGSRAGCSNIAYPRLVMKLVPVGLRGLMMAVMIAALMSDLDSIFNSASTIFTLDVYKLIRRSASSRELMIVGRIFVAFMVVISIAWVPIIVEMQGGQMYLYIQEVADYLTPPVAALFLLAIFWKRCNEQGAFYGGMAGFVLGAVRLTLAFAYRAPECDQPDNRPGFIKDIHYMYVATALFWVTGLITVIVSLLTPPPTKEQIRTTTFWSKKSLVVKESCSPKDEPYKMQEKSILRCSENSEATNHIIPNGKSEDSIKGLQPEDVNLLVTCREEGNPVASLGHSEAETPVDAYSNGQAALMGEKERKKETEDGGRYWKFIDWFCGFKSKSLSKRSLRDLMEEEAVCLQMLEEPPQVKLILNIGLFAVCSLGIFMFVYFSL.

Residues Met1–Asp9 are Extracellular-facing. A helical transmembrane segment spans residues Ile10–Trp29. Topologically, residues Lys30–Gly38 are cytoplasmic. A helical transmembrane segment spans residues Tyr39 to Val57. At Ser58–Ala86 the chain is on the extracellular side. Residues Leu87 to Pro110 traverse the membrane as a helical segment. Topologically, residues Glu111–Gln123 are cytoplasmic. A helical membrane pass occupies residues Val124–Tyr144. Over Ser145–Asn157 the chain is Extracellular. The helical transmembrane segment at Leu158–Tyr183 threads the bilayer. Residues Thr184–Thr186 lie on the Cytoplasmic side of the membrane. The chain crosses the membrane as a helical span at residues Leu187 to Met205. The Extracellular segment spans residues Glu206 to Gly303. N-linked (GlcNAc...) asparagine glycosylation occurs at Asn232. A helical membrane pass occupies residues Phe304–Phe324. Over Ala325 to Arg353 the chain is Cytoplasmic. A helical membrane pass occupies residues Leu354–Met376. The Extracellular portion of the chain corresponds to Ser377–Glu406. The helical transmembrane segment at Leu407 to Val430 threads the bilayer. At Glu431 to Glu443 the chain is on the cytoplasmic side. A helical membrane pass occupies residues Val444–Trp462. The Extracellular segment spans residues Lys463–His510. The chain crosses the membrane as a helical span at residues Tyr511–Leu532. The Cytoplasmic segment spans residues Thr533 to Lys695. A phosphoserine mark is found at Ser594 and Ser632. Residues Leu696 to Phe716 traverse the membrane as a helical segment. Over Ser717–Leu718 the chain is Extracellular.

It belongs to the sodium:solute symporter (SSF) (TC 2.A.21) family. Interacts with KCNQ2 (via the pore module). Interacts with KCNQ1; this interaction is direct. Forms coregulatory complexes with ion channels KCNQ2-KCNQ3 and KCNQ1-KCNE2. Kidney cortex and medulla.

Its subcellular location is the apical cell membrane. It is found in the basolateral cell membrane. The catalysed reaction is myo-inositol(out) + 2 Na(+)(out) = myo-inositol(in) + 2 Na(+)(in). It carries out the reaction scyllo-inositol(out) + 2 Na(+)(out) = scyllo-inositol(in) + 2 Na(+)(in). Its activity is regulated as follows. Inhibited by phlorizin and phloretin. Functionally, electrogenic Na(+)-coupled sugar symporter that actively transports myo-inositol and its stereoisomer scyllo-inositol across the plasma membrane, with a Na(+) to sugar coupling ratio of 2:1. Maintains myo-inositol concentration gradient that defines cell volume and fluid balance during osmotic stress, in particular in the fetoplacental unit and central nervous system. Forms coregulatory complexes with voltage-gated K(+) ion channels, allosterically altering ion selectivity, voltage dependence and gating kinetics of the channel. In turn, K(+) efflux through the channel forms a local electrical gradient that modulates electrogenic Na(+)-coupled myo-inositol influx through the transporter. Associates with KCNQ1-KCNE2 channel in the apical membrane of choroid plexus epithelium and regulates the myo-inositol gradient between blood and cerebrospinal fluid with an impact on neuron excitability. Associates with KCNQ2-KCNQ3 channel altering ion selectivity, increasing Na(+) and Cs(+) permeation relative to K(+) permeation. Provides myo-inositol precursor for biosynthesis of phosphoinositides such as PI(4,5)P2, thus indirectly affecting the activity of phosphoinositide-dependent ion channels and Ca(2+) signaling upon osmotic stress. Has very low affinity for sugars such as L-fucose and L-xylose, with an affinity about three orders of magnitude lower than myo-inositol. This is Sodium/myo-inositol cotransporter (SLC5A3) from Canis lupus familiaris (Dog).